The following is a 217-amino-acid chain: Oxygen-insensitive NAD(P)H nitroreductase (217 aa).

10-14 (RYSTK) contributes to the FMN binding site. Positions 14, 41, 71, 74, and 107 each coordinate NAD(+). Asn71 provides a ligand contact to FMN. Residues 165 to 166 (EG) and 205 to 207 (KSR) contribute to the FMN site.

It belongs to the nitroreductase family. In terms of assembly, homodimer. It depends on FMN as a cofactor.

In terms of biological role, reduction of a variety of nitroaromatic compounds using NADH (and to lesser extent NADPH) as source of reducing equivalents; two electrons are transferred. Capable of reducing nitrofurazone. This is Oxygen-insensitive NAD(P)H nitroreductase from Salmonella typhimurium (strain LT2 / SGSC1412 / ATCC 700720).